Consider the following 357-residue polypeptide: UDP-xylose transporter 3 (357 aa).

The next 10 membrane-spanning stretches (helical) occupy residues 7 to 27, 31 to 51, 75 to 95, 100 to 120, 132 to 152, 154 to 174, 194 to 214, 224 to 244, 250 to 270, and 280 to 300; these read FQLGTIGALSLSVVSSVSIVI, ALISTLGFTFATTLTSWHLLV, VMGFGILNGISIGLLNLSLGF, FYQMTKLAIIPCTVLLETLFF, LTILLLGVGIATVTDLQLNML, SVLSLLAVVTTCVAQIMTNTI, AITLFVTGPFLDGLLTNQNVF, FFIVLSCLISVSVNFSTFLVI, VTYQVLGHLKTCLVLAFGYVL, and ILGILVAVIGMVVYSYYCSIE. At S334 the chain carries Phosphoserine.

Belongs to the TPT transporter family. TPT (TC 2.A.7.9) subfamily. In terms of tissue distribution, ubiquitous.

It is found in the golgi apparatus membrane. Its function is as follows. Nucleotide-sugar transporter that transports UDP-xylose and UMP in a strict counter-exchange mode. This Arabidopsis thaliana (Mouse-ear cress) protein is UDP-xylose transporter 3.